We begin with the raw amino-acid sequence, 475 residues long: Glycogen synthase (475 aa).

Residue Lys15 coordinates ADP-alpha-D-glucose.

This sequence belongs to the glycosyltransferase 1 family. Bacterial/plant glycogen synthase subfamily.

It catalyses the reaction [(1-&gt;4)-alpha-D-glucosyl](n) + ADP-alpha-D-glucose = [(1-&gt;4)-alpha-D-glucosyl](n+1) + ADP + H(+). The protein operates within glycan biosynthesis; glycogen biosynthesis. Synthesizes alpha-1,4-glucan chains using ADP-glucose. The protein is Glycogen synthase of Anaeromyxobacter sp. (strain Fw109-5).